A 478-amino-acid polypeptide reads, in one-letter code: Ankyrin repeat and BTB/POZ domain-containing protein 1 (478 aa).

ANK repeat units follow at residues 1-31 and 35-64; these read MDTS…EVNV and WDST…RCEA. 2 consecutive BTB domains span residues 115-182 and 272-346; these read SDVV…DIGV and PDIC…ELPP. The stretch at 451 to 477 forms a coiled coil; that stretch reads VQTYSAIEEAQQRLRALEDLLVSIGLD.

The protein localises to the cytoplasm. May act as a mediator of the PTEN growth-suppressive signaling pathway. May play a role in developmental processes. This chain is Ankyrin repeat and BTB/POZ domain-containing protein 1, found in Mus musculus (Mouse).